A 254-amino-acid polypeptide reads, in one-letter code: Casein kinase II subunit beta-2 (254 aa).

The protein belongs to the casein kinase 2 subunit beta family. In terms of assembly, tetramer composed of two alpha chains, one beta chain and one beta' chain. In terms of processing, phosphorylated by alpha subunit.

Functionally, regulatory subunit of casein kinase II/CK2. As part of the kinase complex regulates the basal catalytic activity of the alpha subunit a constitutively active serine/threonine-protein kinase that phosphorylates a large number of substrates containing acidic residues C-terminal to the phosphorylated serine or threonine. In Schizosaccharomyces pombe (strain 972 / ATCC 24843) (Fission yeast), this protein is Casein kinase II subunit beta-2.